The chain runs to 417 residues: UPF0754 membrane protein PCC8801_0398 (417 aa).

The next 2 helical transmembrane spans lie at 11–31 and 395–415; these read FSLL…GYFT and IVNI…ILLI.

Belongs to the UPF0754 family.

It localises to the cell inner membrane. The chain is UPF0754 membrane protein PCC8801_0398 from Rippkaea orientalis (strain PCC 8801 / RF-1) (Cyanothece sp. (strain PCC 8801)).